Consider the following 402-residue polypeptide: Dual-specificity RNA methyltransferase RlmN (402 aa).

Catalysis depends on Glu94, which acts as the Proton acceptor. In terms of domain architecture, Radical SAM core spans 100–351 (EDDRGTLCIS…ATVRKTRGDD (252 aa)). A disulfide bond links Cys107 and Cys356. Residues Cys114, Cys118, and Cys121 each contribute to the [4Fe-4S] cluster site. S-adenosyl-L-methionine is bound by residues 182-183 (GE), Ser214, 236-238 (SLH), and Asn313. Cys356 (S-methylcysteine intermediate) is an active-site residue.

It belongs to the radical SAM superfamily. RlmN family. The cofactor is [4Fe-4S] cluster.

The protein resides in the cytoplasm. It catalyses the reaction adenosine(2503) in 23S rRNA + 2 reduced [2Fe-2S]-[ferredoxin] + 2 S-adenosyl-L-methionine = 2-methyladenosine(2503) in 23S rRNA + 5'-deoxyadenosine + L-methionine + 2 oxidized [2Fe-2S]-[ferredoxin] + S-adenosyl-L-homocysteine. It carries out the reaction adenosine(37) in tRNA + 2 reduced [2Fe-2S]-[ferredoxin] + 2 S-adenosyl-L-methionine = 2-methyladenosine(37) in tRNA + 5'-deoxyadenosine + L-methionine + 2 oxidized [2Fe-2S]-[ferredoxin] + S-adenosyl-L-homocysteine. Its function is as follows. Specifically methylates position 2 of adenine 2503 in 23S rRNA and position 2 of adenine 37 in tRNAs. m2A2503 modification seems to play a crucial role in the proofreading step occurring at the peptidyl transferase center and thus would serve to optimize ribosomal fidelity. This Polynucleobacter asymbioticus (strain DSM 18221 / CIP 109841 / QLW-P1DMWA-1) (Polynucleobacter necessarius subsp. asymbioticus) protein is Dual-specificity RNA methyltransferase RlmN.